Consider the following 160-residue polypeptide: Large ribosomal subunit protein uL22c (160 aa).

Belongs to the universal ribosomal protein uL22 family. In terms of assembly, part of the 50S ribosomal subunit.

Its subcellular location is the plastid. The protein resides in the chloroplast. Its function is as follows. This protein binds specifically to 23S rRNA. Functionally, the globular domain of the protein is located near the polypeptide exit tunnel on the outside of the subunit, while an extended beta-hairpin is found that lines the wall of the exit tunnel in the center of the 70S ribosome. This is Large ribosomal subunit protein uL22c (rpl22) from Draba nemorosa (Woodland whitlowgrass).